We begin with the raw amino-acid sequence, 114 residues long: Hydrogenase maturation factor HypA (114 aa).

Residue histidine 2 participates in Ni(2+) binding. 4 residues coordinate Zn(2+): cysteine 70, cysteine 73, cysteine 86, and cysteine 89.

The protein belongs to the HypA/HybF family.

Its function is as follows. Involved in the maturation of [NiFe] hydrogenases. Required for nickel insertion into the metal center of the hydrogenase. In Trichodesmium erythraeum (strain IMS101), this protein is Hydrogenase maturation factor HypA.